Here is a 312-residue protein sequence, read N- to C-terminus: Ribonuclease Z (312 aa).

Zn(2+) contacts are provided by H62, H64, D66, H67, H144, D215, and H273. D66 serves as the catalytic Proton acceptor.

Belongs to the RNase Z family. In terms of assembly, homodimer. Zn(2+) serves as cofactor.

The enzyme catalyses Endonucleolytic cleavage of RNA, removing extra 3' nucleotides from tRNA precursor, generating 3' termini of tRNAs. A 3'-hydroxy group is left at the tRNA terminus and a 5'-phosphoryl group is left at the trailer molecule.. In terms of biological role, zinc phosphodiesterase, which displays some tRNA 3'-processing endonuclease activity. Probably involved in tRNA maturation, by removing a 3'-trailer from precursor tRNA. The sequence is that of Ribonuclease Z from Prochlorococcus marinus subsp. pastoris (strain CCMP1986 / NIES-2087 / MED4).